Consider the following 106-residue polypeptide: Toxin-like structure LSTX-D6 (106 aa).

Residues 1–20 (MMKVLVVAALLVTLISYSSS) form the signal peptide. A propeptide spanning residues 21 to 41 (EGIDDLEADELLSLMANEQTR) is cleaved from the precursor. 4 disulfide bridges follow: C45-C60, C52-C69, C59-C85, and C71-C83.

Belongs to the neurotoxin 19 (CSTX) family. 02 (D7) subfamily. In terms of tissue distribution, expressed by the venom gland.

The protein localises to the secreted. The chain is Toxin-like structure LSTX-D6 from Lycosa singoriensis (Wolf spider).